The sequence spans 295 residues: Small ribosomal subunit biogenesis GTPase RsgA (295 aa).

The 161-residue stretch at 68-228 (KNLLTKPHVA…VVDTPGFANL (161 aa)) folds into the CP-type G domain. GTP-binding positions include 117-120 (NKMD) and 170-178 (GLSGVGKSS). Cysteine 250, cysteine 255, histidine 257, and cysteine 263 together coordinate Zn(2+).

Belongs to the TRAFAC class YlqF/YawG GTPase family. RsgA subfamily. Monomer. Associates with 30S ribosomal subunit, binds 16S rRNA. Requires Zn(2+) as cofactor.

The protein localises to the cytoplasm. In terms of biological role, one of several proteins that assist in the late maturation steps of the functional core of the 30S ribosomal subunit. Helps release RbfA from mature subunits. May play a role in the assembly of ribosomal proteins into the subunit. Circularly permuted GTPase that catalyzes slow GTP hydrolysis, GTPase activity is stimulated by the 30S ribosomal subunit. The chain is Small ribosomal subunit biogenesis GTPase RsgA from Thermotoga maritima (strain ATCC 43589 / DSM 3109 / JCM 10099 / NBRC 100826 / MSB8).